The sequence spans 302 residues: Glycine--tRNA ligase alpha subunit (302 aa).

Belongs to the class-II aminoacyl-tRNA synthetase family. Tetramer of two alpha and two beta subunits.

It localises to the cytoplasm. It carries out the reaction tRNA(Gly) + glycine + ATP = glycyl-tRNA(Gly) + AMP + diphosphate. The protein is Glycine--tRNA ligase alpha subunit of Xanthomonas campestris pv. campestris (strain 8004).